The sequence spans 402 residues: Phosphoglycerate kinase (402 aa).

Substrate is bound by residues 24–26, Arg40, 63–66, Arg122, and Arg155; these read DFN and HFGR. ATP contacts are provided by residues Lys206, Gly297, Glu328, and 357-360; that span reads GGDS.

It belongs to the phosphoglycerate kinase family. As to quaternary structure, monomer.

The protein localises to the cytoplasm. It catalyses the reaction (2R)-3-phosphoglycerate + ATP = (2R)-3-phospho-glyceroyl phosphate + ADP. The protein operates within carbohydrate degradation; glycolysis; pyruvate from D-glyceraldehyde 3-phosphate: step 2/5. The chain is Phosphoglycerate kinase from Synechococcus elongatus (strain ATCC 33912 / PCC 7942 / FACHB-805) (Anacystis nidulans R2).